Here is a 179-residue protein sequence, read N- to C-terminus: Large ribosomal subunit protein uL5 (179 aa).

Belongs to the universal ribosomal protein uL5 family. In terms of assembly, part of the 50S ribosomal subunit; part of the 5S rRNA/L5/L18/L25 subcomplex. Contacts the 5S rRNA and the P site tRNA. Forms a bridge to the 30S subunit in the 70S ribosome.

Its function is as follows. This is one of the proteins that bind and probably mediate the attachment of the 5S RNA into the large ribosomal subunit, where it forms part of the central protuberance. In the 70S ribosome it contacts protein S13 of the 30S subunit (bridge B1b), connecting the 2 subunits; this bridge is implicated in subunit movement. Contacts the P site tRNA; the 5S rRNA and some of its associated proteins might help stabilize positioning of ribosome-bound tRNAs. The polypeptide is Large ribosomal subunit protein uL5 (Enterococcus faecalis (strain ATCC 700802 / V583)).